Reading from the N-terminus, the 1526-residue chain is Ig-like and fibronectin type-III domain-containing protein 2 (1526 aa).

A signal peptide spans 1–19 (MMRWRLAVLFLTLLASTTG). Positions 20-39 (DDTTTKASVSTTTKKGTDGP) are disordered. Residues 20-1415 (DDTTTKASVS…RRSASKGSSS (1396 aa)) are Extracellular-facing. A compositionally biased stretch (low complexity) spans 24–33 (TKASVSTTTK). One can recognise an Ig-like C2-type 1 domain in the interval 39–170 (PHLTTDDEGF…ELLEFQVEVL (132 aa)). Cys61 and Cys154 are disulfide-bonded. 12 N-linked (GlcNAc...) asparagine glycosylation sites follow: Asn87, Asn143, Asn158, Asn181, Asn414, Asn427, Asn475, Asn489, Asn533, Asn590, Asn617, and Asn662. In terms of domain architecture, Fibronectin type-III 1 spans 379–470 (APRGKRDVDF…VRNIASTNVH (92 aa)). The 92-residue stretch at 587-678 (APGNVTISEL…TAKLFSTLPT (92 aa)) folds into the Fibronectin type-III 2 domain. Residues 682-724 (PLCTIGEPIYMNDGRVMICDAVNPCPNGFRCTGAGSDLSYCCP) form the WR1 domain. 7 N-linked (GlcNAc...) asparagine glycosylation sites follow: Asn754, Asn871, Asn906, Asn939, Asn979, Asn1004, and Asn1049. Fibronectin type-III domains lie at 827–914 (AVRN…TKPA) and 924–1020 (APEK…AQKD). Residues 1116–1207 (ASVTMKKDKI…SRVEASSEVI (92 aa)) form the Ig-like C2-type 2 domain. A disulfide bridge connects residues Cys1137 and Cys1190. Residue Asn1250 is glycosylated (N-linked (GlcNAc...) asparagine). Positions 1314–1406 (APSEVSNVRI…SAIPKDSEPR (93 aa)) constitute a Fibronectin type-III 5 domain. Residues 1416–1436 (AFWIVVILVVFGVLIAGLAVL) form a helical membrane-spanning segment. The Cytoplasmic segment spans residues 1437–1526 (SKRRELPYPI…NGMRYAKLET (90 aa)). Residues 1485–1518 (SATTGTAAATQSEWQSANLEANSTTDNSHEYRNG) are disordered. Polar residues predominate over residues 1495–1510 (QSEWQSANLEANSTTD).

The protein localises to the cell membrane. The chain is Ig-like and fibronectin type-III domain-containing protein 2 from Caenorhabditis elegans.